The following is a 520-amino-acid chain: UDP-N-acetylmuramoyl-L-alanyl-D-glutamate--2,6-diaminopimelate ligase (520 aa).

UDP-N-acetyl-alpha-D-muramoyl-L-alanyl-D-glutamate is bound at residue Leu48. Position 134-140 (134-140 (GTSGKTT)) interacts with ATP. Residues 176-177 (TT), Ser203, and Arg211 each bind UDP-N-acetyl-alpha-D-muramoyl-L-alanyl-D-glutamate. Residue Lys243 is modified to N6-carboxylysine. Residues Arg405, 429–432 (DNPR), Gly483, and Glu487 each bind meso-2,6-diaminopimelate. Residues 429 to 432 (DNPR) carry the Meso-diaminopimelate recognition motif motif.

Belongs to the MurCDEF family. MurE subfamily. It depends on Mg(2+) as a cofactor. In terms of processing, carboxylation is probably crucial for Mg(2+) binding and, consequently, for the gamma-phosphate positioning of ATP.

The protein resides in the cytoplasm. It catalyses the reaction UDP-N-acetyl-alpha-D-muramoyl-L-alanyl-D-glutamate + meso-2,6-diaminopimelate + ATP = UDP-N-acetyl-alpha-D-muramoyl-L-alanyl-gamma-D-glutamyl-meso-2,6-diaminopimelate + ADP + phosphate + H(+). The protein operates within cell wall biogenesis; peptidoglycan biosynthesis. Catalyzes the addition of meso-diaminopimelic acid to the nucleotide precursor UDP-N-acetylmuramoyl-L-alanyl-D-glutamate (UMAG) in the biosynthesis of bacterial cell-wall peptidoglycan. This chain is UDP-N-acetylmuramoyl-L-alanyl-D-glutamate--2,6-diaminopimelate ligase, found in Mycobacterium avium (strain 104).